The primary structure comprises 261 residues: Guanine nucleotide exchange factor BopE (261 aa).

Residues 241–253 (RRAAQDASRDEKG) show a composition bias toward basic and acidic residues. Residues 241–261 (RRAAQDASRDEKGAANAADGA) are disordered.

This sequence belongs to the GEF (guanine exchange factor) SopE family. As to quaternary structure, monomer. Interacts with human CDC42.

It is found in the secreted. In terms of biological role, activator for both CDC42 and RAC1 by directly interacting with these Rho GTPases and acting as a guanine nucleotide exchange factor (GEF). This activation results in actin cytoskeleton rearrangements and stimulates membrane ruffling, thus promoting bacterial entry into non-phagocytic cells. The protein is Guanine nucleotide exchange factor BopE (bopE) of Burkholderia thailandensis (strain ATCC 700388 / DSM 13276 / CCUG 48851 / CIP 106301 / E264).